The sequence spans 196 residues: Imidazoleglycerol-phosphate dehydratase (196 aa).

It belongs to the imidazoleglycerol-phosphate dehydratase family.

The protein localises to the cytoplasm. The enzyme catalyses D-erythro-1-(imidazol-4-yl)glycerol 3-phosphate = 3-(imidazol-4-yl)-2-oxopropyl phosphate + H2O. It participates in amino-acid biosynthesis; L-histidine biosynthesis; L-histidine from 5-phospho-alpha-D-ribose 1-diphosphate: step 6/9. The chain is Imidazoleglycerol-phosphate dehydratase from Desulforudis audaxviator (strain MP104C).